The chain runs to 472 residues: Cysteine--tRNA ligase (472 aa).

Cys28 is a binding site for Zn(2+). Positions 30–40 (PTVYNYIHIGN) match the 'HIGH' region motif. Positions 212, 237, and 241 each coordinate Zn(2+). A 'KMSKS' region motif is present at residues 271 to 275 (KMSKS). Residue Lys274 participates in ATP binding.

It belongs to the class-I aminoacyl-tRNA synthetase family. As to quaternary structure, monomer. Requires Zn(2+) as cofactor.

It localises to the cytoplasm. The enzyme catalyses tRNA(Cys) + L-cysteine + ATP = L-cysteinyl-tRNA(Cys) + AMP + diphosphate. This chain is Cysteine--tRNA ligase, found in Limosilactobacillus fermentum (strain NBRC 3956 / LMG 18251) (Lactobacillus fermentum).